A 226-amino-acid chain; its full sequence is ATP synthase F(0) complex subunit a (226 aa).

The next 6 membrane-spanning stretches (helical) occupy residues 10–30 (ITPT…PPVI), 68–88 (WSLM…LGLL), 97–117 (QLSM…ILGF), 138–158 (IPML…ALAV), 164–184 (ITAG…LTSI), and 189–209 (AMIT…VALI).

This sequence belongs to the ATPase A chain family. As to quaternary structure, component of the ATP synthase complex composed at least of ATP5F1A/subunit alpha, ATP5F1B/subunit beta, ATP5MC1/subunit c (homooctomer), MT-ATP6/subunit a, MT-ATP8/subunit 8, ATP5ME/subunit e, ATP5MF/subunit f, ATP5MG/subunit g, ATP5MK/subunit k, ATP5MJ/subunit j, ATP5F1C/subunit gamma, ATP5F1D/subunit delta, ATP5F1E/subunit epsilon, ATP5PF/subunit F6, ATP5PB/subunit b, ATP5PD/subunit d, ATP5PO/subunit OSCP. ATP synthase complex consists of a soluble F(1) head domain (subunits alpha(3) and beta(3)) - the catalytic core - and a membrane F(0) domain - the membrane proton channel (subunits c, a, 8, e, f, g, k and j). These two domains are linked by a central stalk (subunits gamma, delta, and epsilon) rotating inside the F1 region and a stationary peripheral stalk (subunits F6, b, d, and OSCP). Interacts with DNAJC30; interaction is direct.

Its subcellular location is the mitochondrion inner membrane. The enzyme catalyses H(+)(in) = H(+)(out). Its function is as follows. Subunit a, of the mitochondrial membrane ATP synthase complex (F(1)F(0) ATP synthase or Complex V) that produces ATP from ADP in the presence of a proton gradient across the membrane which is generated by electron transport complexes of the respiratory chain. ATP synthase complex consist of a soluble F(1) head domain - the catalytic core - and a membrane F(1) domain - the membrane proton channel. These two domains are linked by a central stalk rotating inside the F(1) region and a stationary peripheral stalk. During catalysis, ATP synthesis in the catalytic domain of F(1) is coupled via a rotary mechanism of the central stalk subunits to proton translocation. With the subunit c (ATP5MC1), forms the proton-conducting channel in the F(0) domain, that contains two crucial half-channels (inlet and outlet) that facilitate proton movement from the mitochondrial intermembrane space (IMS) into the matrix. Protons are taken up via the inlet half-channel and released through the outlet half-channel, following a Grotthuss mechanism. This chain is ATP synthase F(0) complex subunit a, found in Cricetulus griseus (Chinese hamster).